Reading from the N-terminus, the 934-residue chain is Serine/threonine-protein kinase PknD (934 aa).

A Protein kinase domain is found at 4-296 (YELIRLIGRG…ELRKALQPHL (293 aa)). Residues 10 to 18 (IGRGGMGEV) and lysine 33 contribute to the ATP site. Aspartate 138 functions as the Proton acceptor in the catalytic mechanism.

The protein belongs to the protein kinase superfamily. Ser/Thr protein kinase family. Post-translationally, autophosphorylated on serine and threonine residues.

The catalysed reaction is L-seryl-[protein] + ATP = O-phospho-L-seryl-[protein] + ADP + H(+). The enzyme catalyses L-threonyl-[protein] + ATP = O-phospho-L-threonyl-[protein] + ADP + H(+). Its function is as follows. Together with the serine/threonine kinase Pkn1, may play a role in the specific interactions with host proteins during intracellular growth. This Chlamydia muridarum (strain MoPn / Nigg) protein is Serine/threonine-protein kinase PknD.